Here is a 363-residue protein sequence, read N- to C-terminus: tRNA/tmRNA (uracil-C(5))-methyltransferase (363 aa).

S-adenosyl-L-methionine-binding residues include Q187, Y215, N220, E236, and D296. C321 (nucleophile) is an active-site residue. E355 (proton acceptor) is an active-site residue.

Belongs to the class I-like SAM-binding methyltransferase superfamily. RNA M5U methyltransferase family. TrmA subfamily.

The catalysed reaction is uridine(54) in tRNA + S-adenosyl-L-methionine = 5-methyluridine(54) in tRNA + S-adenosyl-L-homocysteine + H(+). It catalyses the reaction uridine(341) in tmRNA + S-adenosyl-L-methionine = 5-methyluridine(341) in tmRNA + S-adenosyl-L-homocysteine + H(+). Dual-specificity methyltransferase that catalyzes the formation of 5-methyluridine at position 54 (m5U54) in all tRNAs, and that of position 341 (m5U341) in tmRNA (transfer-mRNA). This Pseudomonas paraeruginosa (strain DSM 24068 / PA7) (Pseudomonas aeruginosa (strain PA7)) protein is tRNA/tmRNA (uracil-C(5))-methyltransferase.